The primary structure comprises 333 residues: Protoheme IX farnesyltransferase (333 aa).

The next 7 helical transmembrane spans lie at leucine 64–leucine 84, threonine 110–valine 130, leucine 133–leucine 153, isoleucine 161–glycine 181, tryptophan 189–leucine 209, isoleucine 246–phenylalanine 266, and alanine 287–isoleucine 307.

It belongs to the UbiA prenyltransferase family. Protoheme IX farnesyltransferase subfamily.

The protein localises to the cell inner membrane. It catalyses the reaction heme b + (2E,6E)-farnesyl diphosphate + H2O = Fe(II)-heme o + diphosphate. Its pathway is porphyrin-containing compound metabolism; heme O biosynthesis; heme O from protoheme: step 1/1. Its function is as follows. Converts heme B (protoheme IX) to heme O by substitution of the vinyl group on carbon 2 of heme B porphyrin ring with a hydroxyethyl farnesyl side group. The polypeptide is Protoheme IX farnesyltransferase (Prochlorococcus marinus (strain MIT 9312)).